Consider the following 309-residue polypeptide: Glutaminase (309 aa).

Residues Ser-65, Asn-117, Glu-162, Asn-169, Tyr-193, Tyr-245, and Val-263 each coordinate substrate.

It belongs to the glutaminase family. Homotetramer.

It carries out the reaction L-glutamine + H2O = L-glutamate + NH4(+). The protein is Glutaminase of Geobacillus thermodenitrificans (strain NG80-2).